A 106-amino-acid chain; its full sequence is Large ribosomal subunit protein uL30 (106 aa).

It belongs to the universal ribosomal protein uL30 family. In terms of assembly, part of the 50S ribosomal subunit.

The sequence is that of Large ribosomal subunit protein uL30 from Ruthia magnifica subsp. Calyptogena magnifica.